The chain runs to 115 residues: DNA-binding protein APE_1087b (115 aa).

This sequence belongs to the PDCD5 family.

The polypeptide is DNA-binding protein APE_1087b (Aeropyrum pernix (strain ATCC 700893 / DSM 11879 / JCM 9820 / NBRC 100138 / K1)).